We begin with the raw amino-acid sequence, 202 residues long: dITP/XTP pyrophosphatase (202 aa).

Substrate is bound at residue 9–14; sequence TGNKGK. The active-site Proton acceptor is aspartate 73. Aspartate 73 lines the Mg(2+) pocket. Substrate-binding positions include serine 74, 158–161, lysine 181, and 186–187; these read FGYD and HR.

The protein belongs to the HAM1 NTPase family. Homodimer. The cofactor is Mg(2+).

The enzyme catalyses XTP + H2O = XMP + diphosphate + H(+). It catalyses the reaction dITP + H2O = dIMP + diphosphate + H(+). The catalysed reaction is ITP + H2O = IMP + diphosphate + H(+). Functionally, pyrophosphatase that catalyzes the hydrolysis of nucleoside triphosphates to their monophosphate derivatives, with a high preference for the non-canonical purine nucleotides XTP (xanthosine triphosphate), dITP (deoxyinosine triphosphate) and ITP. Seems to function as a house-cleaning enzyme that removes non-canonical purine nucleotides from the nucleotide pool, thus preventing their incorporation into DNA/RNA and avoiding chromosomal lesions. This is dITP/XTP pyrophosphatase from Lactobacillus acidophilus (strain ATCC 700396 / NCK56 / N2 / NCFM).